We begin with the raw amino-acid sequence, 316 residues long: HPr kinase/phosphorylase (316 aa).

Catalysis depends on residues H146 and K167. ATP is bound at residue 161–168 (GESGLGKS). S168 is a Mg(2+) binding site. D185 functions as the Proton acceptor; for phosphorylation activity. Proton donor; for dephosphorylation activity in the catalytic mechanism. Positions 209-218 (LEVRGIGLLD) are important for the catalytic mechanism of both phosphorylation and dephosphorylation. A Mg(2+)-binding site is contributed by E210. Residue R252 is part of the active site. The important for the catalytic mechanism of dephosphorylation stretch occupies residues 273-278 (QVEAGR).

The protein belongs to the HPrK/P family. As to quaternary structure, homohexamer. Mg(2+) serves as cofactor.

The enzyme catalyses [HPr protein]-L-serine + ATP = [HPr protein]-O-phospho-L-serine + ADP + H(+). The catalysed reaction is [HPr protein]-O-phospho-L-serine + phosphate + H(+) = [HPr protein]-L-serine + diphosphate. In terms of biological role, catalyzes the ATP- as well as the pyrophosphate-dependent phosphorylation of a specific serine residue in HPr, a phosphocarrier protein of the phosphoenolpyruvate-dependent sugar phosphotransferase system (PTS). HprK/P also catalyzes the pyrophosphate-producing, inorganic phosphate-dependent dephosphorylation (phosphorolysis) of seryl-phosphorylated HPr (P-Ser-HPr). The chain is HPr kinase/phosphorylase from Polaromonas sp. (strain JS666 / ATCC BAA-500).